The primary structure comprises 273 residues: MAIVKCKPTSAGRRHVVKVVNPELHKGKPFAALLDTKSKTGGRNNYGRITTRHIGGGHKQHYRLIDFKRNKLDIPGVVERLEYDPNRSANIALVLYKDGERRYILAPKGLAAGDQIQAGAHAPIKVGNALPMRNIPVGSTVHNVELKPGKGGQIARSAGSYVQIIAREGNYVTLRLRSGEMRKVLAECSATIGEVGNSEHMLRVLGKAGANRWRGVRPTVRGTAMNPVDHPHGGGEGRNFGKHPVTPWGVQTKGKKTRHNKRTDKYIVRRRGK.

The disordered stretch occupies residues 221–262; it reads RGTAMNPVDHPHGGGEGRNFGKHPVTPWGVQTKGKKTRHNKR. The span at 253–262 shows a compositional bias: basic residues; sequence KGKKTRHNKR.

It belongs to the universal ribosomal protein uL2 family. Part of the 50S ribosomal subunit. Forms a bridge to the 30S subunit in the 70S ribosome.

Its function is as follows. One of the primary rRNA binding proteins. Required for association of the 30S and 50S subunits to form the 70S ribosome, for tRNA binding and peptide bond formation. It has been suggested to have peptidyltransferase activity; this is somewhat controversial. Makes several contacts with the 16S rRNA in the 70S ribosome. In Aggregatibacter actinomycetemcomitans (Actinobacillus actinomycetemcomitans), this protein is Large ribosomal subunit protein uL2.